Reading from the N-terminus, the 58-residue chain is Light-harvesting protein B-875 alpha chain (58 aa).

Over 1–15 (MSKFYKIWMIFDPRR) the chain is Cytoplasmic. The chain crosses the membrane as a helical span at residues 16–36 (VFVAQGVFLFLLAVMIHLILL). A bacteriochlorophyll is bound at residue histidine 32. Topologically, residues 37–58 (STPSYNWLEISAAKYNRVAVAE) are periplasmic.

Belongs to the antenna complex alpha subunit family. The core complex is formed by different alpha and beta chains, binding bacteriochlorophyll molecules, and arranged most probably in tetrameric structures disposed around the reaction center. The non-pigmented gamma chains may constitute additional components.

Its subcellular location is the cell inner membrane. In terms of biological role, antenna complexes are light-harvesting systems, which transfer the excitation energy to the reaction centers. The polypeptide is Light-harvesting protein B-875 alpha chain (pufA) (Cereibacter sphaeroides (strain ATCC 17023 / DSM 158 / JCM 6121 / CCUG 31486 / LMG 2827 / NBRC 12203 / NCIMB 8253 / ATH 2.4.1.) (Rhodobacter sphaeroides)).